The following is an 82-amino-acid chain: Small ribosomal subunit protein bS18 (82 aa).

Belongs to the bacterial ribosomal protein bS18 family. As to quaternary structure, part of the 30S ribosomal subunit. Forms a tight heterodimer with protein bS6.

Functionally, binds as a heterodimer with protein bS6 to the central domain of the 16S rRNA, where it helps stabilize the platform of the 30S subunit. The chain is Small ribosomal subunit protein bS18 from Bifidobacterium adolescentis (strain ATCC 15703 / DSM 20083 / NCTC 11814 / E194a).